Here is a 196-residue protein sequence, read N- to C-terminus: Pyridoxal 5'-phosphate synthase subunit PdxT (196 aa).

46 to 48 contacts L-glutamine; that stretch reads GES. C78 functions as the Nucleophile in the catalytic mechanism. L-glutamine contacts are provided by residues R105 and 133-134; that span reads IR. Residues H169 and E171 each act as charge relay system in the active site.

It belongs to the glutaminase PdxT/SNO family. In terms of assembly, in the presence of PdxS, forms a dodecamer of heterodimers. Only shows activity in the heterodimer.

It catalyses the reaction aldehydo-D-ribose 5-phosphate + D-glyceraldehyde 3-phosphate + L-glutamine = pyridoxal 5'-phosphate + L-glutamate + phosphate + 3 H2O + H(+). The catalysed reaction is L-glutamine + H2O = L-glutamate + NH4(+). Its pathway is cofactor biosynthesis; pyridoxal 5'-phosphate biosynthesis. Catalyzes the hydrolysis of glutamine to glutamate and ammonia as part of the biosynthesis of pyridoxal 5'-phosphate. The resulting ammonia molecule is channeled to the active site of PdxS. The chain is Pyridoxal 5'-phosphate synthase subunit PdxT from Geobacillus stearothermophilus (Bacillus stearothermophilus).